We begin with the raw amino-acid sequence, 254 residues long: 3-dehydroquinate dehydratase (254 aa).

Residues 47 to 49 (EFR) and Arg-83 contribute to the 3-dehydroquinate site. His-144 acts as the Proton donor/acceptor in catalysis. Lys-171 functions as the Schiff-base intermediate with substrate in the catalytic mechanism. The 3-dehydroquinate site is built by Arg-213, Ser-232, and Gln-236.

It belongs to the type-I 3-dehydroquinase family. As to quaternary structure, homodimer.

The enzyme catalyses 3-dehydroquinate = 3-dehydroshikimate + H2O. It participates in metabolic intermediate biosynthesis; chorismate biosynthesis; chorismate from D-erythrose 4-phosphate and phosphoenolpyruvate: step 3/7. In terms of biological role, involved in the third step of the chorismate pathway, which leads to the biosynthesis of aromatic amino acids. Catalyzes the cis-dehydration of 3-dehydroquinate (DHQ) and introduces the first double bond of the aromatic ring to yield 3-dehydroshikimate. In Neisseria meningitidis serogroup C / serotype 2a (strain ATCC 700532 / DSM 15464 / FAM18), this protein is 3-dehydroquinate dehydratase.